We begin with the raw amino-acid sequence, 629 residues long: tRNA uridine 5-carboxymethylaminomethyl modification enzyme MnmG (629 aa).

FAD contacts are provided by residues 13–18 (GGGHAG), Val-125, and Ser-180. 273–287 (GPRYCPSIEDKVMRF) contacts NAD(+). Gln-370 contributes to the FAD binding site.

Belongs to the MnmG family. As to quaternary structure, homodimer. Heterotetramer of two MnmE and two MnmG subunits. The cofactor is FAD.

The protein resides in the cytoplasm. Functionally, NAD-binding protein involved in the addition of a carboxymethylaminomethyl (cmnm) group at the wobble position (U34) of certain tRNAs, forming tRNA-cmnm(5)s(2)U34. In Escherichia coli O127:H6 (strain E2348/69 / EPEC), this protein is tRNA uridine 5-carboxymethylaminomethyl modification enzyme MnmG.